A 98-amino-acid polypeptide reads, in one-letter code: Gas vesicle protein J2 (98 aa).

Residues 75 to 98 (AGVDADDSKSVLERPDPPTTEGSE) form a disordered region. Basic and acidic residues predominate over residues 80 to 90 (DDSKSVLERPD).

Belongs to the gas vesicle GvpA family. In terms of assembly, gvpF to GvpM interact with each other in vitro, and may form multi-subunit complex(es). Interacts with GvpA.

Its subcellular location is the gas vesicle. A minor component of the gas vesicle. Proteins GvpF to GvpM might be involved in nucleating gas vesicle formation. Gas vesicles are hollow, gas filled proteinaceous nanostructures found in several microbial planktonic microorganisms. They allow positioning of halobacteria at the optimal depth for growth in the poorly aerated, shallow brine pools of their habitat. Its function is as follows. Expression of 2 c-vac DNA fragments containing 2 divergently transcribed regions (gvpE-gvpF-gvpG-gvpH-gvpI-gvpJ-gvpK-gvpL-gvpM and gvpA-gvpC-gvpN-gvpO) allows H.volcanii to produce gas vesicles. In Halobacterium salinarum (strain ATCC 700922 / JCM 11081 / NRC-1) (Halobacterium halobium), this protein is Gas vesicle protein J2.